Reading from the N-terminus, the 858-residue chain is KN motif and ankyrin repeat domain-containing protein 2 (858 aa).

The disordered stretch occupies residues 1-29; sequence MAQVLHVSAPFPGTPGPASPPAFPSKEPD. Residues 1–72 are interaction with AIFM1; the sequence is MAQVLHVSAP…AVQRRPRLGS (72 aa). The span at 12–23 shows a compositional bias: pro residues; it reads PGTPGPASPPAF. Residues Ser19, Ser83, Ser86, Ser89, and Ser92 each carry the phosphoserine modification. Arg105 bears the Omega-N-methylarginine mark. The interval 140 to 182 is disordered; sequence AAPAGLGSLTPSAAGSTSSLVGVGLPPPTPRGSGLSTPVPPSA. The span at 148–159 shows a compositional bias: polar residues; it reads LTPSAAGSTSSL. The residue at position 168 (Thr168) is a Phosphothreonine. Coiled coils occupy residues 183 to 234 and 282 to 313; these read GHLA…KSQK and EAAL…QADL. Position 323 is a phosphoserine (Ser323). Residue Thr329 is modified to Phosphothreonine. 2 positions are modified to phosphoserine: Ser356 and Ser375. Disordered stretches follow at residues 412-451 and 488-590; these read CDGA…PAHD and QKEE…SSAK. Over residues 421–435 the composition is skewed to low complexity; it reads APAESSLSPPESEGA. A compositionally biased stretch (polar residues) spans 436-446; that stretch reads TQAQPEKNTGQ. The span at 488 to 499 shows a compositional bias: basic and acidic residues; the sequence is QKEEPTDPEAHR. Positions 509–528 are enriched in low complexity; that stretch reads GSISPRYESSSEDSSTAENF. Ser547 carries the post-translational modification Phosphoserine. A compositionally biased stretch (basic and acidic residues) spans 555 to 569; it reads RPKETAKAKTSREES. At Thr559 the chain carries Phosphothreonine. An ANK 0; degenerate repeat occupies 621 to 658; that stretch reads RELKVAYTTVLQEWLRLACRSDAHPELVRRHLVTFRAM. 5 ANK repeats span residues 673-703, 707-740, 745-774, 778-808, and 812-842; these read NGNT…QVDK, AGYS…DVNA, AGQT…DVNV, DGST…DISI, and DGST…KCSF. Positions 676 to 842 are interaction with NCOA1; that stretch reads TALHYSVSHA…YSRMNIKCSF (167 aa).

In terms of assembly, interacts (non-phosphorylated form) with NCOA1; NCOA2 AND NCOA3. Interacts with AIFM1. Interacts with ARHGDIA; the interaction is direct and may regulate the interaction of ARHGDIA with RHOA, RAC1 and CDC42. Interacts (via ANK repeats 1-5) with KIF21A. Phosphorylated by casein kinase II upon estrogen stimulation. Phosphorylation induces the release by KANK2 of NCOA1 and its translocation to the nucleus where NCOA1 can activate gene transcription.

It is found in the cytoplasm. Its subcellular location is the mitochondrion. Its function is as follows. Involved in transcription regulation by sequestering in the cytoplasm nuclear receptor coactivators such as NCOA1, NCOA2 and NCOA3. Involved in regulation of caspase-independent apoptosis by sequestering the proapoptotic factor AIFM1 in mitochondria. Pro-apoptotic stimuli can induce its proteasomal degradation allowing the translocation of AIFM1 to the nucleus to induce apoptosis. Involved in the negative control of vitamin D receptor signaling pathway. Involved in actin stress fibers formation through its interaction with ARHGDIA and the regulation of the Rho signaling pathway. May thereby play a role in cell adhesion and migration, regulating for instance podocytes migration during development of the kidney. Through the Rho signaling pathway may also regulate cell proliferation. In Bos taurus (Bovine), this protein is KN motif and ankyrin repeat domain-containing protein 2 (KANK2).